A 182-amino-acid polypeptide reads, in one-letter code: MTELANIPELLASRIRDVADYPEPGVMFKDITPLLADPVAFTALTDTLAAGRRRHPRTKVVGLEARGFILGAPVAVRAGLGFIPVRKAGKLPGATLSQAYDLEYGSAEIEVHAEDLAAGDRVLIVDDVLATGGTAEAAIQLIRRAGAEVCGLAVLMELGFLGGRARLEPILDGAPLEALLQV.

The protein belongs to the purine/pyrimidine phosphoribosyltransferase family. As to quaternary structure, homodimer.

The protein resides in the cytoplasm. The enzyme catalyses AMP + diphosphate = 5-phospho-alpha-D-ribose 1-diphosphate + adenine. It functions in the pathway purine metabolism; AMP biosynthesis via salvage pathway; AMP from adenine: step 1/1. Functionally, catalyzes a salvage reaction resulting in the formation of AMP, that is energically less costly than de novo synthesis. The polypeptide is Adenine phosphoribosyltransferase (Streptomyces galbus).